The primary structure comprises 102 residues: Mitochondrial import inner membrane translocase subunit Tim10 B (102 aa).

Positions 27–51 (CFQRCVPSLHHRALDAEEEACLHSC) match the Twin CX3C motif motif. Cystine bridges form between Cys-27–Cys-51 and Cys-31–Cys-47.

In terms of assembly, component of the TIM22 complex, which core is composed of TIMM22, associated with TIMM10 (TIMM10A and/or TIMM10B), TIMM9, AGK and TIMM29.

The protein resides in the mitochondrion inner membrane. Functionally, component of the TIM22 complex, a complex that mediates the import and insertion of multi-pass transmembrane proteins into the mitochondrial inner membrane. The TIM22 complex forms a twin-pore translocase that uses the membrane potential as the external driving force. In the TIM22 complex, it may act as a docking point for the soluble 70 kDa complex that guides the target proteins in transit through the aqueous mitochondrial intermembrane space. The protein is Mitochondrial import inner membrane translocase subunit Tim10 B (TIMM10B) of Pongo abelii (Sumatran orangutan).